The following is a 169-amino-acid chain: Ribosome maturation factor RimP (169 aa).

It belongs to the RimP family.

The protein localises to the cytoplasm. In terms of biological role, required for maturation of 30S ribosomal subunits. This chain is Ribosome maturation factor RimP, found in Koribacter versatilis (strain Ellin345).